Reading from the N-terminus, the 521-residue chain is Leucine-rich repeat-containing protein 24 (521 aa).

Positions 1-23 (MALRAPTLLLLLLGLLLLPLLPG) are cleaved as a signal peptide. The region spanning 24 to 58 (LPPRATGCPAACRCYSATVECGALRLRVVPPGIPP) is the LRRNT domain. LRR repeat units lie at residues 59 to 80 (GTQT…SLAP), 83 to 104 (ALRH…AFRA), 107 to 128 (RLLE…AFVG), 131 to 152 (QLRV…TFLH), 155 to 176 (RLQE…ALAG), and 179 to 200 (SLAL…ALQP). The N-linked (GlcNAc...) asparagine glycan is linked to Asn91. The LRRCT domain occupies 212-267 (NPWRCDCALHWLGSWIKEGGRRLLSSRDKKITCAEPPRLALQSLLEVSGGSLICIP). Positions 268–371 (PSVNVEPPEF…ARVPFHLLVN (104 aa)) constitute an Ig-like C2-type domain. Cys289 and Cys353 are disulfide-bonded. The segment at 306-330 (QPRDGKPQAQAQLEGGAPGLGGHGT) is disordered. N-linked (GlcNAc...) asparagine glycans are attached at residues Asn342 and Asn371. The tract at residues 374 to 395 (RQQSQQLPDPQAPATRPVGHEP) is disordered. Residues 414–434 (AITAAIALLALTALLLAAMIC) traverse the membrane as a helical segment.

It is found in the membrane. The sequence is that of Leucine-rich repeat-containing protein 24 (Lrrc24) from Mus musculus (Mouse).